Reading from the N-terminus, the 931-residue chain is Phosphoenolpyruvate carboxylase (931 aa).

Catalysis depends on residues His-158 and Lys-593.

It belongs to the PEPCase type 1 family. The cofactor is Mg(2+).

The catalysed reaction is oxaloacetate + phosphate = phosphoenolpyruvate + hydrogencarbonate. Functionally, forms oxaloacetate, a four-carbon dicarboxylic acid source for the tricarboxylic acid cycle. In Azorhizobium caulinodans (strain ATCC 43989 / DSM 5975 / JCM 20966 / LMG 6465 / NBRC 14845 / NCIMB 13405 / ORS 571), this protein is Phosphoenolpyruvate carboxylase.